The following is a 134-amino-acid chain: Small ribosomal subunit protein uS8c (134 aa).

Belongs to the universal ribosomal protein uS8 family. Part of the 30S ribosomal subunit.

It is found in the plastid. The protein resides in the chloroplast. Functionally, one of the primary rRNA binding proteins, it binds directly to 16S rRNA central domain where it helps coordinate assembly of the platform of the 30S subunit. In Nicotiana tabacum (Common tobacco), this protein is Small ribosomal subunit protein uS8c (rps8).